The chain runs to 65 residues: Large ribosomal subunit protein bL35 (65 aa).

Over residues 1–16 the composition is skewed to basic residues; that stretch reads MPKMKTHRASAKRFKK. A disordered region spans residues 1-24; the sequence is MPKMKTHRASAKRFKKTANGGLKS.

Belongs to the bacterial ribosomal protein bL35 family.

This chain is Large ribosomal subunit protein bL35, found in Leuconostoc mesenteroides subsp. mesenteroides (strain ATCC 8293 / DSM 20343 / BCRC 11652 / CCM 1803 / JCM 6124 / NCDO 523 / NBRC 100496 / NCIMB 8023 / NCTC 12954 / NRRL B-1118 / 37Y).